Reading from the N-terminus, the 134-residue chain is Complexin-1 (134 aa).

2 disordered regions span residues 1 to 60 and 74 to 113; these read MEFV…AERE and KKEE…EEED. A compositionally biased stretch (basic and acidic residues) spans 15-60; it reads DMGKMLGGDEEKDPDAAKKEEERQEALRQAEEERKAKYAKMEAERE. Residues 29 to 69 are a coiled coil; the sequence is DAAKKEEERQEALRQAEEERKAKYAKMEAEREAVRQGIRDK. An interaction with the SNARE complex region spans residues 48 to 70; the sequence is RKAKYAKMEAEREAVRQGIRDKY.

The protein belongs to the complexin/synaphin family. As to quaternary structure, binds to the SNARE core complex containing SNAP25, VAMP2 and STX1A. In terms of tissue distribution, nervous system. In hippocampus and cerebellum, expressed mainly by inhibitory neurons. Overexpressed in substantia nigra from patients with Parkinson disease.

Its subcellular location is the cytoplasm. The protein resides in the cytosol. It localises to the perikaryon. It is found in the presynapse. Positively regulates a late step in exocytosis of various cytoplasmic vesicles, such as synaptic vesicles and other secretory vesicles. Organizes the SNAREs into a cross-linked zigzag topology that, when interposed between the vesicle and plasma membranes, is incompatible with fusion, thereby preventing SNAREs from releasing neurotransmitters until an action potential arrives at the synapse. Also involved in glucose-induced secretion of insulin by pancreatic beta-cells. Essential for motor behavior. The sequence is that of Complexin-1 (CPLX1) from Homo sapiens (Human).